Here is a 204-residue protein sequence, read N- to C-terminus: uncharacterized protein (204 aa).

The segment at 47 to 108 (TDSSDDEGGA…EDSDEEGEGG (62 aa)) is disordered. Residues 49-106 (SSDDEGGASSGDEGEASSDDEGDASSDDEEEASSDGEGVVEDEETLDAEGEDSDEEGE) show a composition bias toward acidic residues.

The protein resides in the mitochondrion. This is an uncharacterized protein from Paramecium tetraurelia.